We begin with the raw amino-acid sequence, 316 residues long: N-acetylmuramic acid 6-phosphate etherase (316 aa).

Residues 66 to 229 (IVAAIGRGGR…STASMIRLGK (164 aa)) form the SIS domain. Glu-94 acts as the Proton donor in catalysis. The active site involves Glu-125.

Belongs to the GCKR-like family. MurNAc-6-P etherase subfamily. Homodimer.

It carries out the reaction N-acetyl-D-muramate 6-phosphate + H2O = N-acetyl-D-glucosamine 6-phosphate + (R)-lactate. It functions in the pathway amino-sugar metabolism; 1,6-anhydro-N-acetylmuramate degradation. It participates in amino-sugar metabolism; N-acetylmuramate degradation. Its pathway is cell wall biogenesis; peptidoglycan recycling. Its function is as follows. Specifically catalyzes the cleavage of the D-lactyl ether substituent of MurNAc 6-phosphate, producing GlcNAc 6-phosphate and D-lactate. Together with AnmK, is also required for the utilization of anhydro-N-acetylmuramic acid (anhMurNAc) either imported from the medium or derived from its own cell wall murein, and thus plays a role in cell wall recycling. The protein is N-acetylmuramic acid 6-phosphate etherase of Jannaschia sp. (strain CCS1).